The sequence spans 108 residues: Nucleoid-associated protein BTH_I2220 (108 aa).

This sequence belongs to the YbaB/EbfC family. In terms of assembly, homodimer.

Its subcellular location is the cytoplasm. It is found in the nucleoid. Its function is as follows. Binds to DNA and alters its conformation. May be involved in regulation of gene expression, nucleoid organization and DNA protection. The polypeptide is Nucleoid-associated protein BTH_I2220 (Burkholderia thailandensis (strain ATCC 700388 / DSM 13276 / CCUG 48851 / CIP 106301 / E264)).